Here is a 668-residue protein sequence, read N- to C-terminus: mRNA cap guanine-N(7) methyltransferase (668 aa).

Residues M1–S19 show a composition bias toward basic and acidic residues. A disordered region spans residues M1–A281. A compositionally biased stretch (polar residues) spans G44–S65. Over residues S73 to T88 the composition is skewed to low complexity. Residues K100 to A129 are compositionally biased toward polar residues. The segment covering P133–N142 has biased composition (basic and acidic residues). Positions A148–Q157 are enriched in polar residues. The span at L257–M279 shows a compositional bias: basic and acidic residues. One can recognise an mRNA cap 0 methyltransferase domain in the interval S310 to V668. N319–N320 contributes to the mRNA binding site. Residues K323, G366, D390, D428, M471–T473, and Y476 contribute to the S-adenosyl-L-methionine site. The interval A524–D547 is disordered. Positions A537–D547 are enriched in acidic residues.

Belongs to the class I-like SAM-binding methyltransferase superfamily. mRNA cap 0 methyltransferase family.

The protein localises to the nucleus. It carries out the reaction a 5'-end (5'-triphosphoguanosine)-ribonucleoside in mRNA + S-adenosyl-L-methionine = a 5'-end (N(7)-methyl 5'-triphosphoguanosine)-ribonucleoside in mRNA + S-adenosyl-L-homocysteine. In terms of biological role, responsible for methylating the 5'-cap structure of mRNAs. The sequence is that of mRNA cap guanine-N(7) methyltransferase (abd1) from Aspergillus fumigatus (strain ATCC MYA-4609 / CBS 101355 / FGSC A1100 / Af293) (Neosartorya fumigata).